The sequence spans 187 residues: Oligoribonuclease (187 aa).

The Exonuclease domain maps to 7-170; the sequence is LIWIDLEMTG…DDIKDSINEL (164 aa). The active site involves Y128.

This sequence belongs to the oligoribonuclease family.

It localises to the cytoplasm. Functionally, 3'-to-5' exoribonuclease specific for small oligoribonucleotides. The protein is Oligoribonuclease of Legionella pneumophila (strain Paris).